The sequence spans 275 residues: tRNA-splicing endonuclease subunit SEN34 (275 aa).

Catalysis depends on residues Y209, H217, and K250.

It belongs to the tRNA-intron endonuclease family. As to quaternary structure, heterotetramer composed of SEN2, SEN15, SEN34 and SEN54. Interacts directly with SEN15.

The protein resides in the nucleus. It is found in the endomembrane system. Its subcellular location is the mitochondrion outer membrane. The catalysed reaction is pretRNA = a 3'-half-tRNA molecule with a 5'-OH end + a 5'-half-tRNA molecule with a 2',3'-cyclic phosphate end + an intron with a 2',3'-cyclic phosphate and a 5'-hydroxyl terminus.. Constitutes one of the two catalytic subunit of the tRNA-splicing endonuclease complex, a complex responsible for identification and cleavage of the splice sites in pre-tRNA. It cleaves pre-tRNA at the 5'- and 3'-splice sites to release the intron. The products are an intron and two tRNA half-molecules bearing 2',3'-cyclic phosphate and 5'-OH termini. There are no conserved sequences at the splice sites, but the intron is invariably located at the same site in the gene, placing the splice sites an invariant distance from the constant structural features of the tRNA body. It probably carries the active site for 3'-splice site cleavage. The polypeptide is tRNA-splicing endonuclease subunit SEN34 (SEN34) (Saccharomyces cerevisiae (strain ATCC 204508 / S288c) (Baker's yeast)).